We begin with the raw amino-acid sequence, 499 residues long: Lysine--tRNA ligase (499 aa).

Glutamate 409 and glutamate 416 together coordinate Mg(2+).

This sequence belongs to the class-II aminoacyl-tRNA synthetase family. In terms of assembly, homodimer. Mg(2+) serves as cofactor.

It localises to the cytoplasm. The catalysed reaction is tRNA(Lys) + L-lysine + ATP = L-lysyl-tRNA(Lys) + AMP + diphosphate. The chain is Lysine--tRNA ligase from Pseudomonas fluorescens (strain Pf0-1).